Reading from the N-terminus, the 316-residue chain is Porphobilinogen deaminase (316 aa).

The residue at position 242 (Cys242) is an S-(dipyrrolylmethanemethyl)cysteine.

It belongs to the HMBS family. As to quaternary structure, monomer. Dipyrromethane serves as cofactor.

The enzyme catalyses 4 porphobilinogen + H2O = hydroxymethylbilane + 4 NH4(+). Its pathway is porphyrin-containing compound metabolism; protoporphyrin-IX biosynthesis; coproporphyrinogen-III from 5-aminolevulinate: step 2/4. Functionally, tetrapolymerization of the monopyrrole PBG into the hydroxymethylbilane pre-uroporphyrinogen in several discrete steps. This is Porphobilinogen deaminase from Thioalkalivibrio sulfidiphilus (strain HL-EbGR7).